Reading from the N-terminus, the 118-residue chain is p-cumate 2,3-dioxygenase system, ferredoxin component (118 aa).

The Rieske domain maps to 14–111; that stretch reads VGLCATDDVA…VTVEGGQIFV (98 aa). Positions 54, 56, 74, and 77 each coordinate [2Fe-2S] cluster.

This sequence belongs to the bacterial ring-hydroxylating dioxygenase ferredoxin component family. As to quaternary structure, the p-cumate 2,3-dioxygenase multicomponent enzyme system is composed of an electron transfer component and a dioxygenase component (iron sulfur protein (ISP)). The electron transfer component is composed of a ferredoxin reductase (CmtAa) and a ferredoxin (CmtAd), and the dioxygenase component is formed of a large alpha subunit (CmtAb) and a small beta subunit (CmtAc). The cofactor is [2Fe-2S] cluster.

It participates in aromatic compound metabolism; p-cumate degradation; acetaldehyde and pyruvate from p-cumate. Functionally, component of the p-cumate 2,3-dioxygenase multicomponent enzyme system which catalyzes the incorporation of both atoms of molecular oxygen into p-cumate to form cis-2,3-dihydroxy-2,3-dihydro-p-cumate. Functions as an intermediate electron transfer protein via a specific interaction with iron sulfur protein components (ISP)(CmtAb and CmtAc). The sequence is that of p-cumate 2,3-dioxygenase system, ferredoxin component from Pseudomonas putida (Arthrobacter siderocapsulatus).